The sequence spans 312 residues: Ribosomal protein L11 methyltransferase (312 aa).

4 residues coordinate S-adenosyl-L-methionine: threonine 164, glycine 185, aspartate 207, and asparagine 249.

Belongs to the methyltransferase superfamily. PrmA family.

The protein localises to the cytoplasm. It carries out the reaction L-lysyl-[protein] + 3 S-adenosyl-L-methionine = N(6),N(6),N(6)-trimethyl-L-lysyl-[protein] + 3 S-adenosyl-L-homocysteine + 3 H(+). Its function is as follows. Methylates ribosomal protein L11. In Clostridium novyi (strain NT), this protein is Ribosomal protein L11 methyltransferase.